The primary structure comprises 261 residues: Indole-3-glycerol phosphate synthase (261 aa).

The protein belongs to the TrpC family.

The catalysed reaction is 1-(2-carboxyphenylamino)-1-deoxy-D-ribulose 5-phosphate + H(+) = (1S,2R)-1-C-(indol-3-yl)glycerol 3-phosphate + CO2 + H2O. It participates in amino-acid biosynthesis; L-tryptophan biosynthesis; L-tryptophan from chorismate: step 4/5. This is Indole-3-glycerol phosphate synthase from Burkholderia lata (strain ATCC 17760 / DSM 23089 / LMG 22485 / NCIMB 9086 / R18194 / 383).